The sequence spans 85 residues: ATP synthase subunit 9, mitochondrial (85 aa).

2 helical membrane-spanning segments follow: residues 19–39 (IGAG…GNVF) and 61–81 (ILGF…AFLI).

This sequence belongs to the ATPase C chain family. In terms of assembly, F-type ATPases have 2 components, CF(1) - the catalytic core - and CF(0) - the membrane proton channel. CF(1) has five subunits: alpha(3), beta(3), gamma(1), delta(1), epsilon(1). CF(0) has three main subunits: a, b and c.

The protein resides in the mitochondrion membrane. This protein is one of the chains of the nonenzymatic membrane component (F0) of mitochondrial ATPase. This is ATP synthase subunit 9, mitochondrial (ATP9) from Arabidopsis thaliana (Mouse-ear cress).